The sequence spans 395 residues: Vibriobactin-specific isochorismate synthase (395 aa).

This sequence belongs to the isochorismate synthase family.

It catalyses the reaction chorismate = isochorismate. It functions in the pathway siderophore biosynthesis; vibriobactin biosynthesis. The sequence is that of Vibriobactin-specific isochorismate synthase (vibC) from Vibrio cholerae serotype O1 (strain ATCC 39315 / El Tor Inaba N16961).